A 118-amino-acid chain; its full sequence is Small ribosomal subunit protein uS13 (118 aa).

Positions 94 to 118 are disordered; sequence GLPVRGQRTKTNARTRKGPCKPIKK.

It belongs to the universal ribosomal protein uS13 family. As to quaternary structure, part of the 30S ribosomal subunit. Forms a loose heterodimer with protein S19. Forms two bridges to the 50S subunit in the 70S ribosome.

Its function is as follows. Located at the top of the head of the 30S subunit, it contacts several helices of the 16S rRNA. In the 70S ribosome it contacts the 23S rRNA (bridge B1a) and protein L5 of the 50S subunit (bridge B1b), connecting the 2 subunits; these bridges are implicated in subunit movement. Contacts the tRNAs in the A and P-sites. The polypeptide is Small ribosomal subunit protein uS13 (Salmonella typhi).